The chain runs to 302 residues: uncharacterized protein (302 aa).

7 consecutive transmembrane segments (helical) span residues 25–45, 58–78, 104–124, 158–178, 182–202, 215–235, and 247–267; these read SFIFSVYIIIGLIISYLLQIF, FSYLILGYIGVLNAFSNVIAL, IQVGSQVLIMGCVLMAFWMFL, YGLLGVFTWGLFIICLSATVL, FAWAAFLGFSASFCAVVQYVP, ALSIPMMMMQTPGGFLIGYLL, and MMYIVSACLQGLLLMLCMFYL. The PQ-loop domain occupies 175-245; the sequence is ATVLSSNFAW…SRLPGTNWTT (71 aa).

The protein resides in the membrane. This is an uncharacterized protein from Schizosaccharomyces pombe (strain 972 / ATCC 24843) (Fission yeast).